We begin with the raw amino-acid sequence, 474 residues long: Protein nucleotidyltransferase YdiU (474 aa).

ATP is bound by residues G89, G91, R92, K112, D124, G125, R175, and R182. D256 (proton acceptor) is an active-site residue. Residues N257 and D266 each contribute to the Mg(2+) site. Position 266 (D266) interacts with ATP.

Belongs to the SELO family. Requires Mg(2+) as cofactor. The cofactor is Mn(2+).

The catalysed reaction is L-seryl-[protein] + ATP = 3-O-(5'-adenylyl)-L-seryl-[protein] + diphosphate. It carries out the reaction L-threonyl-[protein] + ATP = 3-O-(5'-adenylyl)-L-threonyl-[protein] + diphosphate. It catalyses the reaction L-tyrosyl-[protein] + ATP = O-(5'-adenylyl)-L-tyrosyl-[protein] + diphosphate. The enzyme catalyses L-histidyl-[protein] + UTP = N(tele)-(5'-uridylyl)-L-histidyl-[protein] + diphosphate. The catalysed reaction is L-seryl-[protein] + UTP = O-(5'-uridylyl)-L-seryl-[protein] + diphosphate. It carries out the reaction L-tyrosyl-[protein] + UTP = O-(5'-uridylyl)-L-tyrosyl-[protein] + diphosphate. In terms of biological role, nucleotidyltransferase involved in the post-translational modification of proteins. It can catalyze the addition of adenosine monophosphate (AMP) or uridine monophosphate (UMP) to a protein, resulting in modifications known as AMPylation and UMPylation. This chain is Protein nucleotidyltransferase YdiU, found in Corynebacterium glutamicum (strain ATCC 13032 / DSM 20300 / JCM 1318 / BCRC 11384 / CCUG 27702 / LMG 3730 / NBRC 12168 / NCIMB 10025 / NRRL B-2784 / 534).